The sequence spans 192 residues: uncharacterized protein (192 aa).

The 132-residue stretch at 29–160 (RRQAAVLIPL…PLDIQRRGHD (132 aa)) folds into the Nudix hydrolase domain. Positions 67–89 (GAVDSTDASLIAAALREAHEEVA) match the Nudix box motif. Residues E83 and E87 each contribute to the Mg(2+) site.

The protein belongs to the Nudix hydrolase family. PCD1 subfamily. It depends on Mn(2+) as a cofactor. Requires Mg(2+) as cofactor.

Probably mediates the hydrolysis of some nucleoside diphosphate derivatives. This is an uncharacterized protein from Enterobacter sp. (strain 638).